A 603-amino-acid chain; its full sequence is Shugoshin (603 aa).

Positions 11-74 form a coiled coil; it reads HIQELQNILD…NVQLRSQVSL (64 aa). 2 disordered regions span residues 112–164 and 201–227; these read ESLP…RSST and NEID…SNRR. 2 stretches are compositionally biased toward low complexity: residues 146-157 and 201-214; these read SVSTGSAHSTSS and NEID…DNLL. Residues 218-227 are compositionally biased toward basic residues; it reads PHKKRKSNRR. Residues 304–325 are a coiled coil; that stretch reads KQDILDETEKRDTAVNQKKKLE. The tract at residues 331-399 is disordered; it reads PVEELSSSKN…ESVDFDRPRR (69 aa). Basic residues predominate over residues 362–376; sequence KVKHSMKSRKPKKNK. Residues 431 to 451 adopt a coiled-coil conformation; it reads NIQDLQVKYKKSKKVLEKELK. Over residues 455-467 the composition is skewed to basic and acidic residues; it reads KAMKSPKKNEKTF. Disordered regions lie at residues 455-519 and 583-603; these read KAMK…HSSF and HNDT…KNKA. The segment covering 483-512 has biased composition (low complexity); it reads RPSSTHSTSSVDAECSHNNSHSENINSSIN. Positions 583–593 are enriched in polar residues; that stretch reads HNDTNKSSPKT. Residues 594-603 show a composition bias toward basic residues; it reads YRSRSRKNKA.

The protein belongs to the shugoshin family.

The protein resides in the nucleus. It localises to the chromosome. It is found in the centromere. Its function is as follows. Plays a central role in chromosome cohesion during cell division by preventing premature dissociation of cohesin complex from centromeres after prophase, when most of cohesin complex dissociates from chromosomes arms. In Candida glabrata (strain ATCC 2001 / BCRC 20586 / JCM 3761 / NBRC 0622 / NRRL Y-65 / CBS 138) (Yeast), this protein is Shugoshin (SGO1).